A 278-amino-acid chain; its full sequence is UPF0761 membrane protein CBU_1578 (278 aa).

7 helical membrane passes run 38–58 (LLAL…VPAF), 68–88 (LIWE…LSQL), 92–112 (VTGL…LLMY), 134–154 (FLIY…VMLL), 177–197 (LLFV…NWVL), 207–227 (AVIG…AFTV), and 244–264 (VIPI…LGAV).

This sequence belongs to the UPF0761 family.

The protein resides in the cell inner membrane. In Coxiella burnetii (strain RSA 493 / Nine Mile phase I), this protein is UPF0761 membrane protein CBU_1578.